The primary structure comprises 3598 residues: Dystrophin, isoforms A/C/F/G/H (3598 aa).

The actin-binding stretch occupies residues 1–230 (MEPGILIDER…YVMCLYHAME (230 aa)). Calponin-homology (CH) domains follow at residues 12-116 (HIQK…LEFN) and 127-230 (NGVE…HAME). The tract at residues 233–297 (RTRQQEQEQD…SGELKTHSMR (65 aa)) is disordered. A compositionally biased stretch (polar residues) spans 267-286 (NDQTSLGLYTSDSAGSMEQR). Spectrin repeat units follow at residues 307–420 (VEIS…KILM), 423–525 (AEFQ…KLQQ), 851–963 (QDFG…AIEN), 1056–1170 (SHID…LLEH), 1173–1275 (TQLG…LLEQ), and 1381–1483 (SYES…TLER). 5 disordered regions span residues 1633 to 1696 (ARNT…VMPD), 1716 to 1742 (SLNPQKVTNTPPPKPAKTKRKAPSSPA), 1799 to 1854 (EDSD…ENTS), 1878 to 1941 (RDIL…EPLV), and 2204 to 2233 (GPRISNGKERPDASSAATMSCRSEYNNEPS). The span at 1663–1679 (SGESPSSAHTSSSESPT) shows a compositional bias: low complexity. Over residues 1803–1816 (SSVRVDSQGKEMRR) the composition is skewed to basic and acidic residues. Phosphoserine is present on residues S1832 and S1838. The segment covering 1834–1843 (NDEDSAEQEE) has biased composition (acidic residues). Over residues 1878–1893 (RDILRDSEEEEPKTPD) the composition is skewed to basic and acidic residues. Residues 2218-2233 (SAATMSCRSEYNNEPS) show a composition bias toward polar residues. 5 Spectrin repeats span residues 2237 to 2363 (ALAG…QLKN), 2366 to 2472 (SDSQ…QLHA), 2475 to 2576 (HSLQ…RLES), 2579 to 2712 (EHWN…RLDE), and 2715 to 2819 (TKMR…VLCQ). The interval 2655 to 2679 (VSDTSDTEANHDSDSRYMSAEEQSR) is disordered. Residues 2822–2852 (AQQTHENGDDGRTTSNSGTIGPLPNLGQSVK) form a disordered region. Residues 2849–2882 (QSVKPPWERATTAANVPYYIDHERETTHWDHPEM) form the WW domain. The segment at 3107–3163 (KHQAKCNICKEYPIVGFRYRCLKCFNFDMCQKCFFFGRNAKNHKLTHPMHEYCTTTT) adopts a ZZ-type zinc-finger fold. Zn(2+) contacts are provided by C3112, C3115, C3127, C3130, C3136, C3139, H3149, and H3153. S3207 carries the phosphoserine modification. 4 disordered regions span residues 3316-3344 (EQSGMPEDSNGMQHSSSSMTGLSGQGEQG), 3387-3449 (DEPN…KGIM), 3483-3545 (LHQQ…QQHL), and 3560-3598 (ELESINDDLEDSSSSNTTNTTTTTTTTATTEKTCVELQK). Polar residues-rich tracts occupy residues 3325 to 3337 (NGMQHSSSSMTGL) and 3408 to 3439 (ALNSKPNTLQTRSVTASQLNTDSPAKMNQQNG). Positions 3485 to 3499 (QQQQQQLQQQPPQQQ) are enriched in low complexity. Positions 3505–3523 (GNGGMDISGGMQTSGGYLG) are enriched in gly residues. The span at 3534-3545 (SSLMQQQHQQHL) shows a compositional bias: low complexity. Residues 3560-3570 (ELESINDDLED) are compositionally biased toward acidic residues. Residues 3571–3589 (SSSSNTTNTTTTTTTTATT) are compositionally biased toward low complexity.

In terms of assembly, component of the dystrophin associated protein complex (DAPC). Interacts with Dg, via the Dg WW domain binding sites. In terms of tissue distribution, isoform A, isoform F and isoform G are expressed in the midgut endoderm of stage 12 embryos. In stage 16 embryos, expression is also seen in the pericardial cells, cells at the ectoderm segmental border and cells along the midline of the CNS. During embryogenesis, isoform A is also expressed in the visceral mesoderm, muscle attachment sites, mesectodermal cells at the midline, the gut, and throughout muscle fibers. In larvae, isoform A is found in all muscle fibers, but not detectable in the brain or neuropil.

It is found in the cell membrane. The protein localises to the sarcolemma. The protein resides in the cytoplasm. Its subcellular location is the cytoskeleton. Its function is as follows. Required for the maintenance of appropriate synaptic retrograde communication and the stabilization of muscle cell architecture or physiology. Both det and Dg are required for maintenance of early dpp signaling in the presumptive crossvein. Isoform A is not required to maintain muscle integrity, but plays a role in neuromuscular homeostasis by regulating neurotransmitter release. May play a role in anchoring the cytoskeleton to the plasma membrane. This chain is Dystrophin, isoforms A/C/F/G/H (Dys), found in Drosophila melanogaster (Fruit fly).